The sequence spans 96 residues: uncharacterized protein (96 aa).

This sequence belongs to the mulikevirus gp14 protein family.

The protein localises to the host cytoplasm. This is an uncharacterized protein from Escherichia coli (Bacteriophage D108).